We begin with the raw amino-acid sequence, 542 residues long: Cytochrome P450 27C1 (542 aa).

The transit peptide at 1–80 (MQTSAMALLA…LAAMPGPRTL (80 aa)) directs the protein to the mitochondrion. A disordered region spans residues 20–75 (APERGGLLGGGAPRRPQPAGARLPAGARAEDKGAGRPGSPPGGGRAEGPRSLAAMP). Positions 32-46 (PRRPQPAGARLPAGA) are enriched in low complexity. Cys-488 is a heme binding site.

The protein belongs to the cytochrome P450 family. It depends on heme as a cofactor. Widely expressed, with highest levels in the liver, kidney and pancreas. As to expression, expressed in the skin (at protein level).

It localises to the mitochondrion membrane. The enzyme catalyses all-trans-retinol + 2 reduced [adrenodoxin] + O2 + 2 H(+) = all-trans-3,4-didehydroretinol + 2 oxidized [adrenodoxin] + 2 H2O. It carries out the reaction all-trans-retinol + 2 reduced [adrenodoxin] + O2 + 2 H(+) = all-trans-4-hydroxyretinol + 2 oxidized [adrenodoxin] + H2O. It catalyses the reaction all-trans-retinol + 2 reduced [adrenodoxin] + O2 + 2 H(+) = all-trans-3-hydroxyretinol + 2 oxidized [adrenodoxin] + H2O. It participates in cofactor metabolism; retinol metabolism. Its function is as follows. A cytochrome P450 monooxygenase that catalyzes the 3,4 desaturation of all-trans-retinol (also called vitamin A1) to all-trans-3,4-didehydroretinol (also called vitamin A2) in the skin. Desaturates with lower efficiency all-trans retinal and all-trans retinoic acid. Forms minor amounts of 3-hydroxy and 4-hydroxy all-trans-retinol derivatives. Mechanistically, uses molecular oxygen inserting one oxygen atom into a substrate and reducing the second into a water molecule. Two electrons are provided by NADPH via a two-protein mitochondrial transfer system comprising flavoprotein FDXR (adrenodoxin/ferredoxin reductase) and nonheme iron-sulfur protein FDX1 or FDX2 (adrenodoxin/ferredoxin). This is Cytochrome P450 27C1 from Homo sapiens (Human).